The chain runs to 607 residues: Elongation factor 4 (607 aa).

The region spanning E11–T193 is the tr-type G domain. GTP-binding positions include D23–T28 and N140–D143.

The protein belongs to the TRAFAC class translation factor GTPase superfamily. Classic translation factor GTPase family. LepA subfamily.

The protein localises to the cell membrane. It carries out the reaction GTP + H2O = GDP + phosphate + H(+). Required for accurate and efficient protein synthesis under certain stress conditions. May act as a fidelity factor of the translation reaction, by catalyzing a one-codon backward translocation of tRNAs on improperly translocated ribosomes. Back-translocation proceeds from a post-translocation (POST) complex to a pre-translocation (PRE) complex, thus giving elongation factor G a second chance to translocate the tRNAs correctly. Binds to ribosomes in a GTP-dependent manner. This Streptococcus pneumoniae (strain P1031) protein is Elongation factor 4.